The sequence spans 56 residues: Prokaryotic ubiquitin-like protein UBact (56 aa).

Basic and acidic residues predominate over residues 1 to 28; the sequence is MPQDQQRKKQFDPNPNRDDSQRKTPVDK. The disordered stretch occupies residues 1 to 33; the sequence is MPQDQQRKKQFDPNPNRDDSQRKTPVDKEIDDI. The residue at position 56 (glutamine 56) is a Deamidated glutamine. An Isoglutamyl lysine isopeptide (Gln-Lys) (interchain with K-? in acceptor proteins) cross-link involves residue glutamine 56.

The protein belongs to the ubiquitin-like protein UBact family. Post-translationally, may be modified by deamidation of its C-terminal glutamine to glutamate by the adjacently encoded deamidase. This could be a prerequisite to the subsequent conjugation, as shown in the other prokaryotic ubiquitin-like protein Pup.

Functionally, may function as a protein modifier covalently attached to lysine residues of substrate proteins. This may serve to target the modified proteins for degradation by proteasomes. This chain is Prokaryotic ubiquitin-like protein UBact, found in Yanofskybacteria sp. (strain GW2011_GWA1_39_13).